The primary structure comprises 347 residues: Putative GDP-L-fucose synthase 2 (347 aa).

A disordered region spans residues 1 to 20; the sequence is MPSQQRSSSGSTAKAGDADG. Residue 41–47 participates in NADP(+) binding; that stretch reads GHRGMVG. Tyr-168 (proton donor/acceptor) is an active-site residue. NADP(+)-binding positions include Lys-172, 195 to 198, and His-211; that span reads PNNL. Arg-219, Trp-234, Arg-241, and Glu-301 together coordinate substrate.

The protein belongs to the NAD(P)-dependent epimerase/dehydratase family. Fucose synthase subfamily. Homodimer.

It catalyses the reaction GDP-beta-L-fucose + NADP(+) = GDP-4-dehydro-alpha-D-rhamnose + NADPH + H(+). It participates in nucleotide-sugar biosynthesis; GDP-L-fucose biosynthesis via de novo pathway; GDP-L-fucose from GDP-alpha-D-mannose: step 2/2. In terms of biological role, catalyzes the two-step NADP-dependent conversion of GDP-4-dehydro-6-deoxy-D-mannose to GDP-fucose, involving an epimerase and a reductase reaction. This is Putative GDP-L-fucose synthase 2 from Oryza sativa subsp. japonica (Rice).